Here is a 231-residue protein sequence, read N- to C-terminus: Extracellular deoxyribonuclease (231 aa).

A signal peptide spans 1–20; sequence MMIFRFVTTLAASLPLLTFA.

It belongs to the EndA/NucM nuclease family.

It is found in the secreted. The protein is Extracellular deoxyribonuclease (dns) of Vibrio cholerae serotype O1 (strain ATCC 39315 / El Tor Inaba N16961).